Consider the following 147-residue polypeptide: uncharacterized protein (147 aa).

The HTH marR-type domain maps to Met-1 to Lys-137. A DNA-binding region (H-T-H motif) is located at residues Gln-53–Lys-76.

This is an uncharacterized protein from Bacillus thuringiensis subsp. konkukian (strain 97-27).